Reading from the N-terminus, the 265-residue chain is MKIAIAGASGRMGRMLIETVLNTDGVTLAGALDVPGAAALGQDAGLFLGRETGIKISSDIEAVLSAADCLIDFTRPEGTLAHLAVAKRLGKKMVIGTTGFDAAGKQALADAAKSIGVVFAANMSVGVNATFKLLEVAAKLLSTGYDIEIIEAHHRHKVDAPSGTALAMGEVVAKAIGRDLDECAVYAREGHTGPRDAKSIGFATVRGGDIVGDHTVMFAGIGERIEISHKSSSRQSYADGAVRAARFLADKPSGMFDMQDVLGLK.

NAD(+) is bound by residues Gly-7 to Met-12, Asp-33, Gly-96 to Thr-98, and Ala-120 to Met-123. The active-site Proton donor/acceptor is His-153. His-154 provides a ligand contact to (S)-2,3,4,5-tetrahydrodipicolinate. Residue Lys-157 is the Proton donor of the active site. Gly-163–Thr-164 is a (S)-2,3,4,5-tetrahydrodipicolinate binding site.

This sequence belongs to the DapB family.

The protein localises to the cytoplasm. It carries out the reaction (S)-2,3,4,5-tetrahydrodipicolinate + NAD(+) + H2O = (2S,4S)-4-hydroxy-2,3,4,5-tetrahydrodipicolinate + NADH + H(+). The enzyme catalyses (S)-2,3,4,5-tetrahydrodipicolinate + NADP(+) + H2O = (2S,4S)-4-hydroxy-2,3,4,5-tetrahydrodipicolinate + NADPH + H(+). Its pathway is amino-acid biosynthesis; L-lysine biosynthesis via DAP pathway; (S)-tetrahydrodipicolinate from L-aspartate: step 4/4. Its function is as follows. Catalyzes the conversion of 4-hydroxy-tetrahydrodipicolinate (HTPA) to tetrahydrodipicolinate. The sequence is that of 4-hydroxy-tetrahydrodipicolinate reductase from Cupriavidus metallidurans (strain ATCC 43123 / DSM 2839 / NBRC 102507 / CH34) (Ralstonia metallidurans).